We begin with the raw amino-acid sequence, 714 residues long: Polyribonucleotide nucleotidyltransferase (714 aa).

Mg(2+)-binding residues include aspartate 488 and aspartate 494. In terms of domain architecture, KH spans 555–614 (PRIEVMNIPTDKIRDVIGSGGKVIREIVEKTGAKINIEDDGTVKIASSNGKEIEAAKKWI). Residues 624–692 (GEIYEGTVVK…ERGKVRLSMK (69 aa)) form the S1 motif domain.

Belongs to the polyribonucleotide nucleotidyltransferase family. The cofactor is Mg(2+).

It localises to the cytoplasm. It catalyses the reaction RNA(n+1) + phosphate = RNA(n) + a ribonucleoside 5'-diphosphate. Functionally, involved in mRNA degradation. Catalyzes the phosphorolysis of single-stranded polyribonucleotides processively in the 3'- to 5'-direction. This Brucella melitensis biotype 2 (strain ATCC 23457) protein is Polyribonucleotide nucleotidyltransferase.